A 135-amino-acid chain; its full sequence is Nucleoside diphosphate kinase (135 aa).

Residues Lys9, Phe57, Arg85, Thr91, Arg102, and Asn112 each contribute to the ATP site. His115 functions as the Pros-phosphohistidine intermediate in the catalytic mechanism.

Belongs to the NDK family. In terms of assembly, homotetramer. Mg(2+) serves as cofactor.

The protein localises to the cytoplasm. It carries out the reaction a 2'-deoxyribonucleoside 5'-diphosphate + ATP = a 2'-deoxyribonucleoside 5'-triphosphate + ADP. The enzyme catalyses a ribonucleoside 5'-diphosphate + ATP = a ribonucleoside 5'-triphosphate + ADP. Major role in the synthesis of nucleoside triphosphates other than ATP. The ATP gamma phosphate is transferred to the NDP beta phosphate via a ping-pong mechanism, using a phosphorylated active-site intermediate. The chain is Nucleoside diphosphate kinase from Thermobifida fusca (strain YX).